The chain runs to 71 residues: Small ribosomal subunit protein bS21 (71 aa).

Residues 39 to 71 (EKPTQERKRKAAAAVKRQLRRSSRDVTKRQRLY) form a disordered region. Positions 45-59 (RKRKAAAAVKRQLRR) are enriched in basic residues. Over residues 60–71 (SSRDVTKRQRLY) the composition is skewed to basic and acidic residues.

It belongs to the bacterial ribosomal protein bS21 family.

In Stenotrophomonas maltophilia (strain K279a), this protein is Small ribosomal subunit protein bS21.